Here is a 529-residue protein sequence, read N- to C-terminus: Peptide chain release factor 3 (529 aa).

The tr-type G domain maps to 11–280 (SKRRTFAIIS…SLIKWAPSPI (270 aa)). GTP-binding positions include 20–27 (SHPDAGKT), 88–92 (DTPGH), and 142–145 (NKLD).

This sequence belongs to the TRAFAC class translation factor GTPase superfamily. Classic translation factor GTPase family. PrfC subfamily.

Its subcellular location is the cytoplasm. Increases the formation of ribosomal termination complexes and stimulates activities of RF-1 and RF-2. It binds guanine nucleotides and has strong preference for UGA stop codons. It may interact directly with the ribosome. The stimulation of RF-1 and RF-2 is significantly reduced by GTP and GDP, but not by GMP. The chain is Peptide chain release factor 3 from Buchnera aphidicola subsp. Schizaphis graminum (strain Sg).